Reading from the N-terminus, the 636-residue chain is 1-deoxy-D-xylulose-5-phosphate synthase 2 (636 aa).

Thiamine diphosphate contacts are provided by residues His-78 and 119–121; that span reads AHS. Asp-150 contacts Mg(2+). Residues 151-152, Asn-179, Tyr-288, and Glu-370 each bind thiamine diphosphate; that span reads GS. Asn-179 is a binding site for Mg(2+).

It belongs to the transketolase family. DXPS subfamily. As to quaternary structure, homodimer. Mg(2+) is required as a cofactor. Requires thiamine diphosphate as cofactor.

The enzyme catalyses D-glyceraldehyde 3-phosphate + pyruvate + H(+) = 1-deoxy-D-xylulose 5-phosphate + CO2. It functions in the pathway metabolic intermediate biosynthesis; 1-deoxy-D-xylulose 5-phosphate biosynthesis; 1-deoxy-D-xylulose 5-phosphate from D-glyceraldehyde 3-phosphate and pyruvate: step 1/1. Catalyzes the acyloin condensation reaction between C atoms 2 and 3 of pyruvate and glyceraldehyde 3-phosphate to yield 1-deoxy-D-xylulose-5-phosphate (DXP). This Jannaschia sp. (strain CCS1) protein is 1-deoxy-D-xylulose-5-phosphate synthase 2.